The chain runs to 146 residues: Hemoglobin subunit beta (146 aa).

A Globin domain is found at 2–146; sequence HWSAEEKQLI…VAHALARKYH (145 aa). 2 residues coordinate heme b: His-63 and His-92.

This sequence belongs to the globin family. Heterotetramer of two alpha chains and two beta chains. In terms of tissue distribution, red blood cells.

In terms of biological role, involved in oxygen transport from the lung to the various peripheral tissues. This is Hemoglobin subunit beta (HBB) from Anser indicus (Bar-headed goose).